The sequence spans 122 residues: Hydrogenase maturation factor HypA (122 aa).

Histidine 2 serves as a coordination point for Ni(2+). Residues cysteine 73, cysteine 75, cysteine 95, and cysteine 98 each coordinate Zn(2+).

It belongs to the HypA/HybF family.

Its function is as follows. Involved in the maturation of [NiFe] hydrogenases. Required for nickel insertion into the metal center of the hydrogenase. The sequence is that of Hydrogenase maturation factor HypA from Methanothermobacter thermautotrophicus (strain ATCC 29096 / DSM 1053 / JCM 10044 / NBRC 100330 / Delta H) (Methanobacterium thermoautotrophicum).